The chain runs to 300 residues: 4-hydroxy-tetrahydrodipicolinate synthase (300 aa).

Thr-55 lines the pyruvate pocket. Tyr-143 acts as the Proton donor/acceptor in catalysis. Lys-171 (schiff-base intermediate with substrate) is an active-site residue. Residue Ile-211 coordinates pyruvate.

It belongs to the DapA family. As to quaternary structure, homotetramer; dimer of dimers.

It is found in the cytoplasm. It carries out the reaction L-aspartate 4-semialdehyde + pyruvate = (2S,4S)-4-hydroxy-2,3,4,5-tetrahydrodipicolinate + H2O + H(+). It participates in amino-acid biosynthesis; L-lysine biosynthesis via DAP pathway; (S)-tetrahydrodipicolinate from L-aspartate: step 3/4. Catalyzes the condensation of (S)-aspartate-beta-semialdehyde [(S)-ASA] and pyruvate to 4-hydroxy-tetrahydrodipicolinate (HTPA). In Mycobacterium bovis (strain ATCC BAA-935 / AF2122/97), this protein is 4-hydroxy-tetrahydrodipicolinate synthase.